The sequence spans 329 residues: Cytoplasmic phosphatidylinositol transfer protein 1 (329 aa).

Positions Ser267–Glu329 are disordered.

It belongs to the PtdIns transfer protein family. PI transfer class IIB subfamily.

It localises to the cytoplasm. It carries out the reaction a 1,2-diacyl-sn-glycero-3-phospho-(1D-myo-inositol)(in) = a 1,2-diacyl-sn-glycero-3-phospho-(1D-myo-inositol)(out). The enzyme catalyses a 1,2-diacyl-sn-glycero-3-phosphate(in) = a 1,2-diacyl-sn-glycero-3-phosphate(out). Catalyzes the transfer of phosphatidylinositol (PI) and phosphatidic acid (PA) between membranes. Binds PA derived from the phospholipase D signaling pathway and among the cellular PA species, preferably binds to the C16:0/16:1 and C16:1/18:1 PA species. This Xenopus tropicalis (Western clawed frog) protein is Cytoplasmic phosphatidylinositol transfer protein 1 (pitpnc1).